A 304-amino-acid chain; its full sequence is N-carbamoyl-D-amino acid hydrolase (304 aa).

Residues 5 to 276 (MILAVGQQGP…DEVITAAVDL (272 aa)) enclose the CN hydrolase domain. Residues Glu47, Lys127, and Cys172 contribute to the active site.

In terms of assembly, homotetramer.

It catalyses the reaction an N-carbamoyl-D-amino acid + H2O + 2 H(+) = a D-alpha-amino acid + NH4(+) + CO2. The enzyme catalyzes the hydrolysis of N-carbamoyl-D-amino acids to the corresponding which are useful intermediates in the preparation of beta-lactam antibiotics. Industrial production of beta-lactam antibiotics is now being developed using this enzyme. The sequence is that of N-carbamoyl-D-amino acid hydrolase from Rhizobium radiobacter (Agrobacterium tumefaciens).